The primary structure comprises 473 residues: Glycine receptor subunit beta-type 4 (473 aa).

The signal sequence occupies residues 1-19 (MHSLFLKILIYSLMQCVLG). The Extracellular portion of the chain corresponds to 20–249 (QAEFWDYDEN…EFHVDREITH (230 aa)). Residues Asn-29, Asn-105, and Asn-151 are each glycosylated (N-linked (GlcNAc...) asparagine). Cys-166 and Cys-180 are joined by a disulfide. A helical transmembrane segment spans residues 250–271 (HIIQSYIPTSLIVIISWFSFWL). At 272-276 (DVEAV) the chain is on the cytoplasmic side. The chain crosses the membrane as a helical span at residues 277 to 297 (PGRVSLSITTLLTLATQSSAA). Residues 298-308 (RMALPQASDVK) lie on the Extracellular side of the membrane. A helical transmembrane segment spans residues 309 to 329 (AIDVWMGTCMAFVFSAMIEFT). Residues 330 to 439 (VVNYCVRRKV…NRKNAQKIDR (110 aa)) are Cytoplasmic-facing. Residues 440–460 (YSRALFPLAFIIFNIFYWIYY) form a helical membrane-spanning segment. The Extracellular segment spans residues 461-473 (LKYAGSNSPELLL).

This sequence belongs to the ligand-gated ion channel (TC 1.A.9) family. Glycine receptor (TC 1.A.9.3) subfamily. Pentamer.

Its subcellular location is the postsynaptic cell membrane. The protein localises to the synapse. It localises to the cell membrane. Its function is as follows. Glycine receptors are ligand-gated chloride channels. Channel opening is triggered by extracellular glycine. Contributes to the generation of inhibitory postsynaptic currents. The chain is Glycine receptor subunit beta-type 4 from Caenorhabditis elegans.